A 1072-amino-acid chain; its full sequence is Carbamoyl phosphate synthase large chain (1072 aa).

The carboxyphosphate synthetic domain stretch occupies residues 1–401 (MPKRLDINTI…SLLKAVRSLE (401 aa)). ATP-binding residues include R129, R169, G175, G176, K208, I210, E215, G241, V242, H243, Q284, and E298. Residues 133-327 (RTLMQDLNEP…IAKLAAKIAV (195 aa)) form the ATP-grasp 1 domain. 3 residues coordinate Mg(2+): Q284, E298, and N300. Mn(2+)-binding residues include Q284, E298, and N300. The tract at residues 402-546 (LGIYHLELDH…YSTYAEENES (145 aa)) is oligomerization domain. Residues 547–929 (IVTDRKSVVV…ALYKGLVASG (383 aa)) are carbamoyl phosphate synthetic domain. The ATP-grasp 2 domain maps to 671-861 (EAALTKLGIP…MANVATKVIL (191 aa)). R707, R746, E752, G777, V778, H779, S780, Q820, and E832 together coordinate ATP. Q820, E832, and N834 together coordinate Mg(2+). Residues Q820, E832, and N834 each contribute to the Mn(2+) site. Residues 930 to 1072 (INIPTHGSVI…QTKRHEVVHA (143 aa)) form the MGS-like domain. The interval 930–1072 (INIPTHGSVI…QTKRHEVVHA (143 aa)) is allosteric domain.

This sequence belongs to the CarB family. As to quaternary structure, composed of two chains; the small (or glutamine) chain promotes the hydrolysis of glutamine to ammonia, which is used by the large (or ammonia) chain to synthesize carbamoyl phosphate. Tetramer of heterodimers (alpha,beta)4. It depends on Mg(2+) as a cofactor. Requires Mn(2+) as cofactor.

It carries out the reaction hydrogencarbonate + L-glutamine + 2 ATP + H2O = carbamoyl phosphate + L-glutamate + 2 ADP + phosphate + 2 H(+). It catalyses the reaction hydrogencarbonate + NH4(+) + 2 ATP = carbamoyl phosphate + 2 ADP + phosphate + 2 H(+). It participates in amino-acid biosynthesis; L-arginine biosynthesis; carbamoyl phosphate from bicarbonate: step 1/1. It functions in the pathway pyrimidine metabolism; UMP biosynthesis via de novo pathway; (S)-dihydroorotate from bicarbonate: step 1/3. In terms of biological role, large subunit of the glutamine-dependent carbamoyl phosphate synthetase (CPSase). CPSase catalyzes the formation of carbamoyl phosphate from the ammonia moiety of glutamine, carbonate, and phosphate donated by ATP, constituting the first step of 2 biosynthetic pathways, one leading to arginine and/or urea and the other to pyrimidine nucleotides. The large subunit (synthetase) binds the substrates ammonia (free or transferred from glutamine from the small subunit), hydrogencarbonate and ATP and carries out an ATP-coupled ligase reaction, activating hydrogencarbonate by forming carboxy phosphate which reacts with ammonia to form carbamoyl phosphate. This chain is Carbamoyl phosphate synthase large chain, found in Bacillus cereus (strain ATCC 10987 / NRS 248).